The following is a 197-amino-acid chain: Small ribosomal subunit protein uS4y (197 aa).

One can recognise an S4 RNA-binding domain in the interval 109-183 (RRLQTIVFKS…VKRRNERAGA (75 aa)). Positions 161–197 (SLTSPFGGGRPGRVKRRNERAGAKKASGGDGDEDDEE) are disordered.

The protein belongs to the universal ribosomal protein uS4 family. In terms of assembly, binds to the translation initiation factors TIF3E1.

This is Small ribosomal subunit protein uS4y (RPS9C) from Arabidopsis thaliana (Mouse-ear cress).